We begin with the raw amino-acid sequence, 476 residues long: MATPANQTGRITQVIGAVVDVQFEGHLPAILNAIETKNGDNRLVLEVAQHLGESTVRTIAMDTTEGLVRGQEVTDTGSPIMVPVGIGTLGRIMNVIGEPVDEQGPVANEGLRPIHAEAPLYTDQSTEAEILVTGIKVVDLLAPYAKGGKIGLFGGAGVGKTVLIQELINNVAKAHGGYSVFAGVGERTREGNDLYHEFIESGVNKKGGGEGSKCALVYGQMNEPPGARARVALSGLTVAEHFRDQGQDVLFFVDNIFRFTQAGSEVSALLGRIPSAVGYQPTLATDMGALQERITTTHKGSITSVQAIYVPADDLTDPAPATSFAHLDATTVLNRAISEKGIYPAVDPLDSTSRMLSPLIVGEEHYQTARMVQQVLQKYKSLQDIIAILGMDELSEEDKLAVARARKIERFLSQPFFVAEIFTGSPGKFVDLADTIKGFRAICEGKYDHLPEAAFYMVGAIEEAVEKGKKLAAEAA.

An ATP-binding site is contributed by 154-161; it reads GGAGVGKT.

This sequence belongs to the ATPase alpha/beta chains family. F-type ATPases have 2 components, CF(1) - the catalytic core - and CF(0) - the membrane proton channel. CF(1) has five subunits: alpha(3), beta(3), gamma(1), delta(1), epsilon(1). CF(0) has four main subunits: a(1), b(1), b'(1) and c(9-12).

Its subcellular location is the cell inner membrane. The enzyme catalyses ATP + H2O + 4 H(+)(in) = ADP + phosphate + 5 H(+)(out). In terms of biological role, produces ATP from ADP in the presence of a proton gradient across the membrane. The catalytic sites are hosted primarily by the beta subunits. The polypeptide is ATP synthase subunit beta (Rhodopseudomonas palustris (strain BisB5)).